A 294-amino-acid polypeptide reads, in one-letter code: Ribosomal protein L11 methyltransferase (294 aa).

Threonine 145, glycine 166, aspartate 188, and asparagine 227 together coordinate S-adenosyl-L-methionine.

Belongs to the methyltransferase superfamily. PrmA family.

It localises to the cytoplasm. It carries out the reaction L-lysyl-[protein] + 3 S-adenosyl-L-methionine = N(6),N(6),N(6)-trimethyl-L-lysyl-[protein] + 3 S-adenosyl-L-homocysteine + 3 H(+). Methylates ribosomal protein L11. The sequence is that of Ribosomal protein L11 methyltransferase from Hydrogenovibrio crunogenus (strain DSM 25203 / XCL-2) (Thiomicrospira crunogena).